We begin with the raw amino-acid sequence, 184 residues long: MAGKGSYVPPQYIPLYSLDTEEDRVPAVEENHATRPKLNQDPTQWSSGICACFDDPQSCCIGAICPCFLFGKNAQFLGSGTLAGSCTTHCMLWGLLTSLCCVFTGGLVLAVPGSAVACYACGYRSALRTKYNLPEAPCGDLTTHLFCHLCAICQEYREIRERTGSGSSPAPNVTPPPVQTMDEL.

Residues Met-91–Val-111 form a helical membrane-spanning segment. A disordered region spans residues Arg-162–Leu-184.

This sequence belongs to the cornifelin family. In terms of tissue distribution, expressed in roots, leaves, stalks, immature ears, endosperm and pollen.

The protein localises to the membrane. This chain is Cell number regulator 5 (CNR5), found in Zea mays (Maize).